The primary structure comprises 391 residues: Solute carrier family 35 member F2 (391 aa).

10 helical membrane-spanning segments follow: residues 39–59, 73–93, 108–128, 137–157, 165–185, 200–220, 230–250, 267–287, 294–314, and 318–338; these read MLLS…IRLT, LFQS…TLAV, WWKY…VVKA, IQLL…FFLL, FIGA…DVLM, LIGD…SVCQ, VELL…QLAI, LLYV…PVVI, AINL…LFLF, and FSGL…FYFS. Positions 361-391 are disordered; it reads VELPSSGQLEPSVTYTSLSQETEEEPRVRVA. Polar residues predominate over residues 365–380; the sequence is SSGQLEPSVTYTSLSQ.

It belongs to the SLC35F solute transporter family.

The protein resides in the membrane. Its function is as follows. Putative solute transporter. This is Solute carrier family 35 member F2 (slc35f2) from Xenopus tropicalis (Western clawed frog).